Consider the following 131-residue polypeptide: Ribonuclease P protein component (131 aa).

The protein belongs to the RnpA family. Consists of a catalytic RNA component (M1 or rnpB) and a protein subunit.

The enzyme catalyses Endonucleolytic cleavage of RNA, removing 5'-extranucleotides from tRNA precursor.. In terms of biological role, RNaseP catalyzes the removal of the 5'-leader sequence from pre-tRNA to produce the mature 5'-terminus. It can also cleave other RNA substrates such as 4.5S RNA. The protein component plays an auxiliary but essential role in vivo by binding to the 5'-leader sequence and broadening the substrate specificity of the ribozyme. In Cyanothece sp. (strain PCC 7425 / ATCC 29141), this protein is Ribonuclease P protein component.